A 100-amino-acid polypeptide reads, in one-letter code: Secreted protein of Ly-6 domain 1 (100 aa).

The N-terminal stretch at 1–22 (MAKCLLLLLLVVLSSLLGLPQA) is a signal peptide. One can recognise a UPAR/Ly6 domain in the interval 23 to 100 (LECFQCNRVN…CHDSPLCNKF (78 aa)). 5 cysteine pairs are disulfide-bonded: cysteine 25/cysteine 52, cysteine 28/cysteine 37, cysteine 44/cysteine 70, cysteine 74/cysteine 90, and cysteine 91/cysteine 97. Asparagine 60 is a glycosylation site (N-linked (GlcNAc...) asparagine).

Post-translationally, glycosylated. In terms of tissue distribution, expressed in placenta, where it is detected in both fetal tissues (cotyledon and intercotyledon) and maternal tissues (caruncle and intercaruncular endometrium) (at protein level). Expressed in the mesenchyme area of villi in the cotyledon (at protein level). In endometrium, expressed in the luminal epithelium and weakly in the subluminal stroma (at protein level). Detected in trophoblast mononucleate cells (TMCs) (at protein level). Also detected in trophoblast binucleate cells (BNCs). Overall, expression is strongest in fetal tissue and lower in maternal tissue. Not detected in other tissues tested.

It is found in the secreted. Its function is as follows. Binds specifically to type I collagen. The sequence is that of Secreted protein of Ly-6 domain 1 from Bos taurus (Bovine).